A 428-amino-acid polypeptide reads, in one-letter code: Histidine--tRNA ligase (428 aa).

This sequence belongs to the class-II aminoacyl-tRNA synthetase family.

It is found in the cytoplasm. The enzyme catalyses tRNA(His) + L-histidine + ATP = L-histidyl-tRNA(His) + AMP + diphosphate + H(+). The polypeptide is Histidine--tRNA ligase (Sulfolobus acidocaldarius (strain ATCC 33909 / DSM 639 / JCM 8929 / NBRC 15157 / NCIMB 11770)).